The chain runs to 375 residues: Succinyl-diaminopimelate desuccinylase (375 aa).

Residue histidine 66 coordinates Zn(2+). The active site involves aspartate 68. Zn(2+) is bound at residue aspartate 99. Glutamate 133 acts as the Proton acceptor in catalysis. Zn(2+) contacts are provided by glutamate 134, glutamate 162, and histidine 348.

It belongs to the peptidase M20A family. DapE subfamily. As to quaternary structure, homodimer. Requires Zn(2+) as cofactor. The cofactor is Co(2+).

The enzyme catalyses N-succinyl-(2S,6S)-2,6-diaminopimelate + H2O = (2S,6S)-2,6-diaminopimelate + succinate. It functions in the pathway amino-acid biosynthesis; L-lysine biosynthesis via DAP pathway; LL-2,6-diaminopimelate from (S)-tetrahydrodipicolinate (succinylase route): step 3/3. Its function is as follows. Catalyzes the hydrolysis of N-succinyl-L,L-diaminopimelic acid (SDAP), forming succinate and LL-2,6-diaminopimelate (DAP), an intermediate involved in the bacterial biosynthesis of lysine and meso-diaminopimelic acid, an essential component of bacterial cell walls. The polypeptide is Succinyl-diaminopimelate desuccinylase (Yersinia enterocolitica serotype O:8 / biotype 1B (strain NCTC 13174 / 8081)).